Reading from the N-terminus, the 135-residue chain is uncharacterized protein (135 aa).

The HTH merR-type domain occupies 2–71 (TYTTAKAAEK…LKDIKRFAEC (70 aa)). The H-T-H motif DNA-binding region spans 5 to 24 (TAKAAEKIGISAYTLRFYDK).

This is an uncharacterized protein from Haemophilus influenzae (strain ATCC 51907 / DSM 11121 / KW20 / Rd).